We begin with the raw amino-acid sequence, 214 residues long: Uracil phosphoribosyltransferase (214 aa).

5-phospho-alpha-D-ribose 1-diphosphate-binding positions include Arg-107 and 135 to 143 (DPMLATGKT). Uracil contacts are provided by residues Ile-198 and 203–205 (GDA). A 5-phospho-alpha-D-ribose 1-diphosphate-binding site is contributed by Asp-204.

The protein belongs to the UPRTase family. Mg(2+) is required as a cofactor.

The catalysed reaction is UMP + diphosphate = 5-phospho-alpha-D-ribose 1-diphosphate + uracil. It participates in pyrimidine metabolism; UMP biosynthesis via salvage pathway; UMP from uracil: step 1/1. Its activity is regulated as follows. Allosterically activated by GTP. Catalyzes the conversion of uracil and 5-phospho-alpha-D-ribose 1-diphosphate (PRPP) to UMP and diphosphate. This chain is Uracil phosphoribosyltransferase, found in Aeropyrum pernix (strain ATCC 700893 / DSM 11879 / JCM 9820 / NBRC 100138 / K1).